A 251-amino-acid chain; its full sequence is Malonyl-[acyl-carrier protein] O-methyltransferase (251 aa).

It belongs to the methyltransferase superfamily.

The catalysed reaction is malonyl-[ACP] + S-adenosyl-L-methionine = malonyl-[ACP] methyl ester + S-adenosyl-L-homocysteine. It functions in the pathway cofactor biosynthesis; biotin biosynthesis. Its function is as follows. Converts the free carboxyl group of a malonyl-thioester to its methyl ester by transfer of a methyl group from S-adenosyl-L-methionine (SAM). It allows to synthesize pimeloyl-ACP via the fatty acid synthetic pathway. This is Malonyl-[acyl-carrier protein] O-methyltransferase from Salmonella typhimurium (strain LT2 / SGSC1412 / ATCC 700720).